Reading from the N-terminus, the 160-residue chain is Transcription antitermination protein NusB (160 aa).

This sequence belongs to the NusB family.

Functionally, involved in transcription antitermination. Required for transcription of ribosomal RNA (rRNA) genes. Binds specifically to the boxA antiterminator sequence of the ribosomal RNA (rrn) operons. This Rhizobium rhizogenes (strain K84 / ATCC BAA-868) (Agrobacterium radiobacter) protein is Transcription antitermination protein NusB.